The chain runs to 118 residues: V-type proton ATPase subunit G 3 (118 aa).

A compositionally biased stretch (polar residues) spans 1–12 (MASQSQGIQQLL). The segment at 1–37 (MASQSQGIQQLLQAEKRAKDKLEEAKKRKNKRLRQAK) is disordered. Positions 3–53 (SQSQGIQQLLQAEKRAKDKLEEAKKRKNKRLRQAKEEATADIDQYRLKREG) form a coiled coil. Residues 14 to 26 (AEKRAKDKLEEAK) are compositionally biased toward basic and acidic residues.

It belongs to the V-ATPase G subunit family. V-ATPase is a heteromultimeric enzyme made up of two complexes: the ATP-hydrolytic V1 complex and the proton translocation V0 complex. The V1 complex consists of three catalytic AB heterodimers that form a heterohexamer, three peripheral stalks each consisting of EG heterodimers, one central rotor including subunits D and F, and the regulatory subunits C and H. The proton translocation complex V0 consists of the proton transport subunit a, a ring of proteolipid subunits c9c'', rotary subunit d, subunits e and f, and two accessory subunits.

Subunit of the V1 complex of vacuolar(H+)-ATPase (V-ATPase), a multisubunit enzyme composed of a peripheral complex (V1) that hydrolyzes ATP and a membrane integral complex (V0) that translocates protons. V-ATPase is responsible for acidifying and maintaining the pH of intracellular compartments and in some cell types, is targeted to the plasma membrane, where it is responsible for acidifying the extracellular environment. In Xenopus tropicalis (Western clawed frog), this protein is V-type proton ATPase subunit G 3 (atp6v1g3).